Consider the following 155-residue polypeptide: uncharacterized protein (155 aa).

Residues 37–140 (IAELRKKLNL…GGYRLKTTDN (104 aa)) form the SCP domain.

This is an uncharacterized protein from Borreliella burgdorferi (strain ATCC 35210 / DSM 4680 / CIP 102532 / B31) (Borrelia burgdorferi).